The sequence spans 203 residues: uncharacterized protein (203 aa).

This is an uncharacterized protein from Methanocaldococcus jannaschii (strain ATCC 43067 / DSM 2661 / JAL-1 / JCM 10045 / NBRC 100440) (Methanococcus jannaschii).